The chain runs to 184 residues: MNRTAYTVGALLLLLGTLLPTAEGKKKGSQGAIPPPDKAQHNDSEQTQSPPQPGSRTRGRGQGRGTAMPGEEVLESSQEALHVTERKYLKRDWCKTQPLKQTIHEEGCNSRTIINRFCYGQCNSFYIPRHIRKEEGSFQSCSFCKPKKFTTMMVTLNCPELQPPTKKKRVTRVKQCRCISIDLD.

Residues 1-24 (MNRTAYTVGALLLLLGTLLPTAEG) form the signal peptide. The disordered stretch occupies residues 23–77 (EGKKKGSQGAIPPPDKAQHNDSEQTQSPPQPGSRTRGRGQGRGTAMPGEEVLESS). N-linked (GlcNAc...) asparagine glycosylation occurs at asparagine 42. Cystine bridges form between cysteine 94/cysteine 144, cysteine 108/cysteine 158, cysteine 118/cysteine 176, and cysteine 122/cysteine 178. The 91-residue stretch at 94–184 (CKTQPLKQTI…QCRCISIDLD (91 aa)) folds into the CTCK domain.

This sequence belongs to the DAN family. As to quaternary structure, homodimer; can also form homooligomers. Interacts with BMP2; can form higher oligomers with BMP2. Interacts with SLIT1 and SLIT2 in a glycosylation-dependent manner. Highly expressed in spleen and to a lesser extent in lung, skeletal muscle and kidney. Expressed only in non-transformed cells or primary fibroblasts in culture but not in established transformed or tumor derived cell lines. Broadly expressed in limb bud mesenchyme but restricted to the distal limb bud mesenchyme and concentrated posteriorly. Expressed in ovary especially in granulosa cells of follicles of type 4.

It localises to the secreted. Functionally, cytokine that may play an important role during carcinogenesis and metanephric kidney organogenesis, as BMP a antagonist required for early limb outgrowth and patterning in maintaining the FGF4-SHH feedback loop. Down-regulates the BMP4 signaling in a dose-dependent manner. Antagonist of BMP2; inhibits BMP2-mediated differentiation of osteoblasts (in vitro). Acts as inhibitor of monocyte chemotaxis. The polypeptide is Gremlin-1 (Grem1) (Mus musculus (Mouse)).